Consider the following 519-residue polypeptide: Maturase K (519 aa).

This sequence belongs to the intron maturase 2 family. MatK subfamily.

Its subcellular location is the plastid. It localises to the chloroplast. Usually encoded in the trnK tRNA gene intron. Probably assists in splicing its own and other chloroplast group II introns. The chain is Maturase K from Keteleeria davidiana (David's keteleeria).